Here is a 353-residue protein sequence, read N- to C-terminus: Protein RecA (353 aa).

ATP is bound at residue 65 to 72 (GPESSGKT).

Belongs to the RecA family.

The protein resides in the cytoplasm. In terms of biological role, can catalyze the hydrolysis of ATP in the presence of single-stranded DNA, the ATP-dependent uptake of single-stranded DNA by duplex DNA, and the ATP-dependent hybridization of homologous single-stranded DNAs. It interacts with LexA causing its activation and leading to its autocatalytic cleavage. The protein is Protein RecA of Aeromonas salmonicida (strain A449).